A 496-amino-acid polypeptide reads, in one-letter code: Probable CtpA-like serine protease (496 aa).

The span at 1-16 shows a compositional bias: basic and acidic residues; sequence MDDKQHTSSSDDERAE. The segment at 1–27 is disordered; it reads MDDKQHTSSSDDERAEIATSNQDQETN. Over residues 18–27 the composition is skewed to polar residues; sequence ATSNQDQETN. Residues 39-59 form a helical membrane-spanning segment; sequence FISILIGTILITAVITVVAYI. In terms of domain architecture, PDZ spans 124 to 206; it reads TKSFNEGVSG…TEVTLTVQRG (83 aa). Catalysis depends on charge relay system residues S329, D340, and K354.

Belongs to the peptidase S41A family.

Its subcellular location is the cell membrane. This chain is Probable CtpA-like serine protease, found in Staphylococcus aureus (strain MSSA476).